Here is a 115-residue protein sequence, read N- to C-terminus: Autophagy-related protein 8i (115 aa).

A lipid anchor (Phosphatidylethanolamine amidated glycine) is attached at G115.

The protein belongs to the ATG8 family. Interacts with ATG4. Interacts with NBR1. In terms of processing, gly-115 forms then a thioester bond with the 'Cys-558' of ATG7 (E1-like activating enzyme) before being transferred to the 'Cys-258' of ATG3 (the specific E2 conjugating enzyme), in order to be finally amidated with phosphatidylethanolamine. This lipid modification anchors ATG8 to autophagosomes. As to expression, constitutively expressed.

It is found in the cytoplasmic vesicle. The protein localises to the autophagosome membrane. Its subcellular location is the vacuole membrane. The protein resides in the cytoplasm. It localises to the cytoskeleton. In terms of biological role, ubiquitin-like modifier involved in autophagosomes formation. May mediate the delivery of the autophagosomes to the vacuole via the microtubule cytoskeleton. The polypeptide is Autophagy-related protein 8i (ATG8I) (Arabidopsis thaliana (Mouse-ear cress)).